The sequence spans 757 residues: RNA cytosine C(5)-methyltransferase NSUN2 (757 aa).

The tract at residues methionine 1–glutamate 35 is disordered. Serine 23 carries the post-translational modification Phosphoserine. A Glycyl lysine isopeptide (Lys-Gly) (interchain with G-Cter in SUMO2) cross-link involves residue lysine 46. Phosphoserine; by AURKB is present on serine 139. Residues cysteine 184–lysine 190, aspartate 215, aspartate 242, and aspartate 268 each bind S-adenosyl-L-methionine. Catalysis depends on cysteine 321, which acts as the Nucleophile. The segment at asparagine 436–proline 504 is disordered. Phosphoserine is present on residues serine 456 and serine 473. Polar residues predominate over residues glycine 463–isoleucine 476. Glycyl lysine isopeptide (Lys-Gly) (interchain with G-Cter in SUMO2) cross-links involve residues lysine 510 and lysine 515. Lysine 585 is subject to N6-acetyllysine; alternate. Residue lysine 585 is modified to N6-malonyllysine; alternate. A Glycyl lysine isopeptide (Lys-Gly) (interchain with G-Cter in SUMO2); alternate cross-link involves residue lysine 585. Serine 592 carries the phosphoserine modification. Residues lysine 639, lysine 653, and lysine 659 each participate in a glycyl lysine isopeptide (Lys-Gly) (interchain with G-Cter in SUMO2) cross-link. The tract at residues leucine 716–arginine 757 is disordered. Position 717 is a phosphothreonine (threonine 717). Serine 723 is modified (phosphoserine).

Belongs to the class I-like SAM-binding methyltransferase superfamily. RsmB/NOP family. TRM4 subfamily. In terms of assembly, interacts with NPM1 and NCL during interphase; interaction is disrupted following phosphorylation at Ser-139. In terms of processing, phosphorylated at Ser-139 by AURKB during mitosis, leading to abolish methyltransferase activity and the interaction with NPM1. Ubiquitously expressed at low level. Up-regulated in tumors. Dynamically expressed during morphogenesis and in adult skin: in adult skin, expression is up-regulated in the bulge and hair germ as soon as the hair follicle enters its growing phase (anagen). During anagen, expressed at highest level in cells of the hair germ that give rise to the hair matrix.

The protein resides in the nucleus. It localises to the nucleolus. The protein localises to the cytoplasm. It is found in the mitochondrion. Its subcellular location is the cytoskeleton. The protein resides in the spindle. It localises to the secreted. The protein localises to the extracellular exosome. The catalysed reaction is cytidine(48) in tRNA + S-adenosyl-L-methionine = 5-methylcytidine(48) in tRNA + S-adenosyl-L-homocysteine + H(+). The enzyme catalyses cytidine(49) in tRNA + S-adenosyl-L-methionine = 5-methylcytidine(49) in tRNA + S-adenosyl-L-homocysteine + H(+). It catalyses the reaction cytidine(50) in tRNA + S-adenosyl-L-methionine = 5-methylcytidine(50) in tRNA + S-adenosyl-L-homocysteine + H(+). It carries out the reaction cytidine(34) in tRNA precursor + S-adenosyl-L-methionine = 5-methylcytidine(34) in tRNA precursor + S-adenosyl-L-homocysteine + H(+). The catalysed reaction is a cytidine in mRNA + S-adenosyl-L-methionine = a 5-methylcytidine in mRNA + S-adenosyl-L-homocysteine + H(+). With respect to regulation, inhibited by magnesium ions. RNA cytosine C(5)-methyltransferase that methylates cytosine to 5-methylcytosine (m5C) in various RNAs, such as tRNAs, mRNAs and some long non-coding RNAs (lncRNAs). Involved in various processes, such as epidermal stem cell differentiation, testis differentiation and maternal to zygotic transition during early development: acts by increasing protein synthesis; cytosine C(5)-methylation promoting tRNA stability and preventing mRNA decay. Methylates cytosine to 5-methylcytosine (m5C) at positions 34 and 48 of intron-containing tRNA(Leu)(CAA) precursors, and at positions 48, 49 and 50 of tRNA(Gly)(GCC) precursors. tRNA methylation is required generation of RNA fragments derived from tRNAs (tRFs). Also mediates C(5)-methylation of mitochondrial tRNAs. Catalyzes cytosine C(5)-methylation of mRNAs, leading to stabilize them and prevent mRNA decay: mRNA stabilization involves YBX1 that specifically recognizes and binds m5C-modified transcripts. Cytosine C(5)-methylation of mRNAs also regulates mRNA export: methylated transcripts are specifically recognized by THOC4/ALYREF, which mediates mRNA nucleo-cytoplasmic shuttling. Also mediates cytosine C(5)-methylation of non-coding RNAs, such as vault RNAs (vtRNAs), promoting their processing into regulatory small RNAs. Cytosine C(5)-methylation of vtRNA VTRNA1.1 promotes its processing into small-vault RNA4 (svRNA4) and regulates epidermal differentiation. May act downstream of Myc to regulate epidermal cell growth and proliferation. Required for proper spindle assembly and chromosome segregation, independently of its methyltransferase activity. The sequence is that of RNA cytosine C(5)-methyltransferase NSUN2 from Mus musculus (Mouse).